The following is a 678-amino-acid chain: UvrABC system protein C (678 aa).

The GIY-YIG domain occupies 16-95 (VEPGVYRFRD…IKEFDPRFNI (80 aa)). The UVR domain maps to 208-243 (DRLIREMEQQMTAAAEDLDFERAARLRDNIGAMRRA). A compositionally biased stretch (low complexity) spans 649-667 (EAPPEPGAEAPPDSGAAAA). The disordered stretch occupies residues 649 to 678 (EAPPEPGAEAPPDSGAAAAVMGNDQSRVPG).

It belongs to the UvrC family. Interacts with UvrB in an incision complex.

Its subcellular location is the cytoplasm. Its function is as follows. The UvrABC repair system catalyzes the recognition and processing of DNA lesions. UvrC both incises the 5' and 3' sides of the lesion. The N-terminal half is responsible for the 3' incision and the C-terminal half is responsible for the 5' incision. This is UvrABC system protein C from Mycolicibacterium gilvum (strain PYR-GCK) (Mycobacterium gilvum (strain PYR-GCK)).